A 307-amino-acid chain; its full sequence is Glycine--tRNA ligase alpha subunit (307 aa).

Belongs to the class-II aminoacyl-tRNA synthetase family. Tetramer of two alpha and two beta subunits.

It is found in the cytoplasm. It catalyses the reaction tRNA(Gly) + glycine + ATP = glycyl-tRNA(Gly) + AMP + diphosphate. The sequence is that of Glycine--tRNA ligase alpha subunit from Levilactobacillus brevis (strain ATCC 367 / BCRC 12310 / CIP 105137 / JCM 1170 / LMG 11437 / NCIMB 947 / NCTC 947) (Lactobacillus brevis).